A 64-amino-acid polypeptide reads, in one-letter code: Prokaryotic ubiquitin-like protein Pup (64 aa).

Basic and acidic residues predominate over residues 1-11 (MAQEQTKRGGG). The tract at residues 1-37 (MAQEQTKRGGGGDDEDDFASSTAAGQERREKLAEDTD) is disordered. Positions 21–58 (STAAGQERREKLAEDTDDLLDEIDDVLEENAEDFVRAY) are ARC ATPase binding. A coiled-coil region spans residues 24 to 52 (AGQERREKLAEDTDDLLDEIDDVLEENAE). Gln-64 carries the deamidated glutamine modification. An Isoglutamyl lysine isopeptide (Gln-Lys) (interchain with K-? in acceptor proteins) cross-link involves residue Gln-64.

The protein belongs to the prokaryotic ubiquitin-like protein family. As to quaternary structure, strongly interacts with the proteasome-associated ATPase ARC through a hydrophobic interface; the interacting region of Pup lies in its C-terminal half. There is one Pup binding site per ARC hexamer ring. Post-translationally, is modified by deamidation of its C-terminal glutamine to glutamate by the deamidase Dop, a prerequisite to the subsequent pupylation process.

The protein operates within protein degradation; proteasomal Pup-dependent pathway. Protein modifier that is covalently attached to lysine residues of substrate proteins, thereby targeting them for proteasomal degradation. The tagging system is termed pupylation. In Mycolicibacterium paratuberculosis (strain ATCC BAA-968 / K-10) (Mycobacterium paratuberculosis), this protein is Prokaryotic ubiquitin-like protein Pup.